The sequence spans 359 residues: Tropomodulin-1 (359 aa).

A disordered region spans residues 39 to 61 (PDNALLPAGLRQKDQTTKAPTGP). Residues 39-138 (PDNALLPAGL…CDIAAILGMH (100 aa)) are tropomyosin-binding.

Belongs to the tropomodulin family. In terms of assembly, binds to the N-terminus of tropomyosin and to actin. Interacts with FLII.

Its subcellular location is the cytoplasm. The protein resides in the cytoskeleton. Blocks the elongation and depolymerization of the actin filaments at the pointed end. The Tmod/TM complex contributes to the formation of the short actin protofilament, which in turn defines the geometry of the membrane skeleton. May play an important role in regulating the organization of actin filaments by preferentially binding to a specific tropomyosin isoform at its N-terminus. This chain is Tropomodulin-1 (TMOD1), found in Bos taurus (Bovine).